Reading from the N-terminus, the 492-residue chain is MEPSSKKLTGRLMLAVGGAVLGSLQFGYNTGVINAPQKVIEEFYNQTWVHRYGESILPTTLTTLWSLSVAIFSVGGMIGSFSVGLFVNRFGRRNSMLMMNLLAFVSAVLMGFSKLGKSFEMLILGRFIIGVYCGLTTGFVPMYVGEVSPTALRGALGTLHQLGIVVGILIAQVFGLDSIMGNKDLWPLLLSIIFIPALLQCIVLPFCPESPRFLLINRNEENRAKSVLKKLRGTADVTHDLQEMKEESRQMMREKKVTILELFRSPAYRQPILIAVVLQLSQQLSGINAVFYYSTSIFEKAGVQQPVYATIGSGIVNTAFTVVSLFVVERAGRRTLHLIGLAGMAGCAILMTIALALLEQLPWMSYLSIVAIFGFVAFFEVGPGPIPWFIVAELFSQGPRPAAIAVAGFSNWTSNFIVGMCFQYVEQLCGPYVFIIFTVLLVLFFIFTYFKVPETKGRTFDEIASGFRQGGASQSDKTPEELFHPLGADSQV.

The residue at position 1 (M1) is an N-acetylmethionine. Topologically, residues 1 to 11 (MEPSSKKLTGR) are cytoplasmic. Residues 12–33 (LMLAVGGAVLGSLQFGYNTGVI) traverse the membrane as a helical segment. Residues 34–66 (NAPQKVIEEFYNQTWVHRYGESILPTTLTTLWS) are Extracellular-facing. An N-linked (GlcNAc...) asparagine glycan is attached at N45. Residues 67 to 87 (LSVAIFSVGGMIGSFSVGLFV) form a helical membrane-spanning segment. Topologically, residues 88–90 (NRF) are cytoplasmic. The chain crosses the membrane as a helical span at residues 91 to 112 (GRRNSMLMMNLLAFVSAVLMGF). Residues 113–120 (SKLGKSFE) are Extracellular-facing. The chain crosses the membrane as a helical span at residues 121-144 (MLILGRFIIGVYCGLTTGFVPMYV). Position 137 (T137) interacts with cytochalasin B. Residues 145 to 155 (GEVSPTALRGA) are Cytoplasmic-facing. Residues 156–176 (LGTLHQLGIVVGILIAQVFGL) traverse the membrane as a helical segment. At 177–185 (DSIMGNKDL) the chain is on the extracellular side. The chain crosses the membrane as a helical span at residues 186–206 (WPLLLSIIFIPALLQCIVLPF). The Cytoplasmic segment spans residues 207–271 (CPESPRFLLI…LFRSPAYRQP (65 aa)). Position 226 is a phosphoserine; by PKC/PRKCB (S226). The helical transmembrane segment at 272-293 (ILIAVVLQLSQQLSGINAVFYY) threads the bilayer. Q282 provides a ligand contact to cytochalasin B. D-glucose is bound by residues 282-283 (QQ) and N288. At 294–306 (STSIFEKAGVQQP) the chain is on the extracellular side. The helical transmembrane segment at 307–328 (VYATIGSGIVNTAFTVVSLFVV) threads the bilayer. N317 provides a ligand contact to D-glucose. Residues 329-334 (ERAGRR) are Cytoplasmic-facing. The helical transmembrane segment at 335-355 (TLHLIGLAGMAGCAILMTIAL) threads the bilayer. At 356 to 365 (ALLEQLPWMS) the chain is on the extracellular side. A helical membrane pass occupies residues 366–388 (YLSIVAIFGFVAFFEVGPGPIPW). Residue E380 participates in D-glucose binding. Residue W388 coordinates cytochalasin B. The Cytoplasmic portion of the chain corresponds to 389–401 (FIVAELFSQGPRP). Residues 402 to 422 (AAIAVAGFSNWTSNFIVGMCF) form a helical membrane-spanning segment. Cytochalasin B is bound at residue N411. Over 423 to 429 (QYVEQLC) the chain is Extracellular. The helical transmembrane segment at 430 to 450 (GPYVFIIFTVLLVLFFIFTYF) threads the bilayer. The Cytoplasmic segment spans residues 451 to 492 (KVPETKGRTFDEIASGFRQGGASQSDKTPEELFHPLGADSQV). Position 465 is a phosphoserine (S465). The interval 468 to 492 (RQGGASQSDKTPEELFHPLGADSQV) is disordered. A Phosphothreonine modification is found at T478. At S490 the chain carries Phosphoserine.

This sequence belongs to the major facilitator superfamily. Sugar transporter (TC 2.A.1.1) family. Glucose transporter subfamily. Interacts with GIPC (via PDZ domain). Found in a complex with ADD2, DMTN and SLC2A1. Interacts (via C-terminus cytoplasmic region) with DMTN isoform 2. Interacts with SNX27; the interaction is required when endocytosed to prevent degradation in lysosomes and promote recycling to the plasma membrane. Interacts with STOM. Interacts with SGTA (via Gln-rich region). Interacts with isoform 1 of BSG. In terms of processing, phosphorylation at Ser-226 by PKC promotes glucose uptake by increasing cell membrane localization. Detected in erythrocytes (at protein level). Expressed at variable levels in many human tissues.

It localises to the cell membrane. The protein resides in the melanosome. Its subcellular location is the photoreceptor inner segment. The catalysed reaction is D-glucose(out) = D-glucose(in). It functions in the pathway carbohydrate degradation. Its activity is regulated as follows. The uptake of glucose is inhibited by cytochalasin B and Phe-amide core-scaffold inhibitors GLUT-i1 and GLUT-i2. These inhibitors bind in the central cavity of the inward-open state and overlap the glucose-binding site. Glucose uptake is increased in response to phorbol ester 12-O-tetradecanoylphorbol-13-acetate (TPA) treatment: TPA-induced glucose uptake requires phosphorylation at Ser-226. Interacts with SMIM43; the interaction may promote SLC2A1-mediated glucose transport to meet the energy needs of mesendoderm differentiation. Its function is as follows. Facilitative glucose transporter, which is responsible for constitutive or basal glucose uptake. Has a very broad substrate specificity; can transport a wide range of aldoses including both pentoses and hexoses. Most important energy carrier of the brain: present at the blood-brain barrier and assures the energy-independent, facilitative transport of glucose into the brain. In association with BSG and NXNL1, promotes retinal cone survival by increasing glucose uptake into photoreceptors. Required for mesendoderm differentiation. This chain is Solute carrier family 2, facilitated glucose transporter member 1, found in Homo sapiens (Human).